The chain runs to 426 residues: Proline--tRNA ligase (426 aa).

Belongs to the class-II aminoacyl-tRNA synthetase family. ProS type 2 subfamily. Homodimer.

The protein localises to the cytoplasm. The enzyme catalyses tRNA(Pro) + L-proline + ATP = L-prolyl-tRNA(Pro) + AMP + diphosphate. Catalyzes the attachment of proline to tRNA(Pro) in a two-step reaction: proline is first activated by ATP to form Pro-AMP and then transferred to the acceptor end of tRNA(Pro). This Ehrlichia ruminantium (strain Gardel) protein is Proline--tRNA ligase.